The sequence spans 252 residues: MAGHSKWATTKHKKAANDAKRGKEFAKLVKNIEVAARMGGGDPSANPTLDDMIKKAKKASVPNDNIERARKRGSGEEAGGADWVPIMYEGYGPNGVAVLIECLTDNRNRAATEVRTAMSKNGGNLGETGSVSYMFTRTGIVQVKKGELTEDDVLIAVLEAGAEEVNDLGEVFEITCEPTDLEAVKAALVDAGIEIEDADSDFRASVEVPLDAEGARKIFRLVDALEDSDDVQNVYTNITLSDEVLAELENDE.

The segment at 1–22 (MAGHSKWATTKHKKAANDAKRG) is disordered.

This sequence belongs to the TACO1 family.

The protein resides in the cytoplasm. This chain is Probable transcriptional regulatory protein CE1776, found in Corynebacterium efficiens (strain DSM 44549 / YS-314 / AJ 12310 / JCM 11189 / NBRC 100395).